The following is a 514-amino-acid chain: Beta-glucosidase 21 (514 aa).

The first 25 residues, 1–25, serve as a signal peptide directing secretion; that stretch reads MERPLHLLLVFLSSPWLLLLQGVSS. 2 residues coordinate a beta-D-glucoside: Gln47 and His147. Glu193 serves as the catalytic Proton donor. A disulfide bridge connects residues Cys212 and Cys220. Asn219 and Asn224 each carry an N-linked (GlcNAc...) asparagine glycan. Tyr336 and Glu406 together coordinate a beta-D-glucoside. The active-site Nucleophile is Glu406. Residue Asn407 is glycosylated (N-linked (GlcNAc...) asparagine). Residues Trp448 and Phe465 each coordinate a beta-D-glucoside. Asn494 carries an N-linked (GlcNAc...) asparagine glycan.

Belongs to the glycosyl hydrolase 1 family.

It carries out the reaction Hydrolysis of terminal, non-reducing beta-D-glucosyl residues with release of beta-D-glucose.. This Oryza sativa subsp. japonica (Rice) protein is Beta-glucosidase 21 (BGLU21).